Here is an 823-residue protein sequence, read N- to C-terminus: Ankyrin repeat domain-containing protein 20B (823 aa).

6 ANK repeats span residues 32–65, 66–95, 99–128, 132–161, 165–194, and 198–227; these read SELQKIHRAAVKGDAAEVERCLARRSGDLDARDK, QHRTALHLACASGHVQVVTLLVNRKCQIDI, ENRTPLIQAVHCQEEACAVILLKHGANPNL, YGNTALHYAVYSESTSLAEKLLSHGAHIEA, DSNTPLLFAIICKKEKMVEFLLKKKASTHA, and LRRSALMLAVYYDSPGIVSILLKQNIDVFA. 2 disordered regions span residues 302–343 and 355–401; these read PEKV…GVED and VQTL…QLSE. Over residues 372–382 the composition is skewed to basic and acidic residues; the sequence is QERHERSEKKQ. Coiled-coil stretches lie at residues 431–480, 565–724, and 776–805; these read KKLK…KQLE, EMIT…NNST, and LVLEEKSKKLMNECDHLKESLFQYEREKAE.

The chain is Ankyrin repeat domain-containing protein 20B (ANKRD20A8P) from Homo sapiens (Human).